Here is a 728-residue protein sequence, read N- to C-terminus: Elongation factor 2 (728 aa).

Residues 19-261 (EQIRNIAIAA…MVAEHFPNPI (243 aa)) enclose the tr-type G domain. Residues 28–35 (AHVDHGKT), 94–98 (DTPGH), and 148–151 (NKVD) contribute to the GTP site. H596 carries the diphthamide modification.

This sequence belongs to the TRAFAC class translation factor GTPase superfamily. Classic translation factor GTPase family. EF-G/EF-2 subfamily.

The protein localises to the cytoplasm. In terms of biological role, catalyzes the GTP-dependent ribosomal translocation step during translation elongation. During this step, the ribosome changes from the pre-translocational (PRE) to the post-translocational (POST) state as the newly formed A-site-bound peptidyl-tRNA and P-site-bound deacylated tRNA move to the P and E sites, respectively. Catalyzes the coordinated movement of the two tRNA molecules, the mRNA and conformational changes in the ribosome. This is Elongation factor 2 from Halobacterium salinarum (strain ATCC 29341 / DSM 671 / R1).